The sequence spans 416 residues: Trifolitoxin-processing protein TfxD (416 aa).

The next 11 helical transmembrane spans lie at M24–V44, V48–M68, V79–A99, I114–A134, S153–T173, S176–A196, A230–A250, I255–G275, V295–I315, I322–L342, and V372–L392.

Its subcellular location is the cell membrane. Functionally, the actions of the proteins TfxB, TfxD and TfxF are implicated in the processing of the inactive trifolitoxin (TfxA) precursor into the active peptide. The sequence is that of Trifolitoxin-processing protein TfxD (tfxD) from Rhizobium leguminosarum bv. trifolii.